The following is a 707-amino-acid chain: Leukotoxin export ATP-binding protein LtxB (707 aa).

A Peptidase C39 domain is found at glutamine 4–isoleucine 125. Histidine 83 is a catalytic residue. The next 5 membrane-spanning stretches (helical) occupy residues leucine 158–valine 178, leucine 191–leucine 211, alanine 269–tyrosine 289, leucine 295–leucine 315, and alanine 387–isoleucine 407. Residues leucine 158–glutamine 436 form the ABC transmembrane type-1 domain. Residues isoleucine 468–glutamine 703 enclose the ABC transporter domain. ATP is bound at residue glycine 502–serine 509.

This sequence belongs to the ABC transporter superfamily. Protein-1 exporter (TC 3.A.1.109) family. In terms of assembly, probably part of a complex composed of LtxB, LtxD and TdeA, which forms a single transport channel across the two membranes.

Its subcellular location is the cell inner membrane. The catalysed reaction is ATP + H2O + proteinSide 1 = ADP + phosphate + proteinSide 2.. Functionally, involved in the export of the LtxA leukotoxin. The protein is Leukotoxin export ATP-binding protein LtxB of Aggregatibacter actinomycetemcomitans (Actinobacillus actinomycetemcomitans).